We begin with the raw amino-acid sequence, 662 residues long: Zinc finger protein 800 (662 aa).

The segment at 69 to 91 (FECKLCRSLFRGLPNLITHKKFY) adopts a C2H2-type 1; degenerate zinc-finger fold. Lys132 participates in a covalent cross-link: Glycyl lysine isopeptide (Lys-Gly) (interchain with G-Cter in SUMO2). Disordered stretches follow at residues 172–197 (ETSSEQLKAVPDADTEVEEAIEPPSI) and 205–224 (AAPTEEQPQESQADLETSDS). A compositionally biased stretch (low complexity) spans 205-216 (AAPTEEQPQESQ). Residues 231–254 (LICCLCRKEFNSRRGVRRHIRKVH) form a C2H2-type 2 zinc finger. Lys280 is covalently cross-linked (Glycyl lysine isopeptide (Lys-Gly) (interchain with G-Cter in SUMO2)). A C2H2-type 3 zinc finger spans residues 288-311 (RSCPVCCKSFATKANVRRHFDEVH). Ser318 is modified (phosphoserine). Positions 319-349 (ITPDIATKPGQPLFLDSASPKKSFKTRKQKS) are disordered. Position 320 is a phosphothreonine (Thr320). Ser337 is subject to Phosphoserine. Residues 340-349 (KSFKTRKQKS) are compositionally biased toward basic residues. The segment at 357 to 382 (TACKCLLCKRKYSSQIMLKRHMQIVH) adopts a C2H2-type 4 zinc-finger fold. The disordered stretch occupies residues 389 to 473 (ANSKREKGPN…AGGQQKTRKP (85 aa)). Lys392 participates in a covalent cross-link: Glycyl lysine isopeptide (Lys-Gly) (interchain with G-Cter in SUMO2). The segment covering 414 to 434 (VESSPPSITHSPQNELKGTNH) has biased composition (polar residues). Phosphoserine occurs at positions 420, 424, 453, 455, 458, and 460. A compositionally biased stretch (low complexity) spans 456 to 468 (PKSASPSAAGGQQ). A Glycyl lysine isopeptide (Lys-Gly) (interchain with G-Cter in SUMO2) cross-link involves residue Lys474. C2H2-type zinc fingers lie at residues 484-506 (LYCKLCKRQFTSKQNLTKHIELH) and 517-540 (YKCPLCTYETRRKRDVIRHITVVH). Disordered stretches follow at residues 573–597 (RGPSREEAKHNDSKQDGTSNSPSKK) and 633–662 (HHKKTHKANATNSPEGNKTKGRSTRSKALV). The span at 575-587 (PSREEAKHNDSKQ) shows a compositional bias: basic and acidic residues. Lys597 participates in a covalent cross-link: Glycyl lysine isopeptide (Lys-Gly) (interchain with G-Cter in SUMO2). The segment at 616–638 (HRCNKCGKAFAKKTYLEHHKKTH) adopts a C2H2-type 7 zinc-finger fold. The span at 651 to 662 (TKGRSTRSKALV) shows a compositional bias: basic residues.

Belongs to the krueppel C2H2-type zinc-finger protein family.

It is found in the nucleus. Functionally, may be involved in transcriptional regulation. The protein is Zinc finger protein 800 (Znf800) of Mus musculus (Mouse).